The primary structure comprises 867 residues: Probable beta-glucosidase A (867 aa).

The first 18 residues, Met-1–Ala-18, serve as a signal peptide directing secretion. 3 N-linked (GlcNAc...) asparagine glycosylation sites follow: Asn-67, Asn-218, and Asn-259. The active site involves Asp-287. 9 N-linked (GlcNAc...) asparagine glycosylation sites follow: Asn-322, Asn-329, Asn-361, Asn-449, Asn-530, Asn-549, Asn-571, Asn-675, and Asn-719.

The protein belongs to the glycosyl hydrolase 3 family.

The protein resides in the secreted. The enzyme catalyses Hydrolysis of terminal, non-reducing beta-D-glucosyl residues with release of beta-D-glucose.. Its pathway is glycan metabolism; cellulose degradation. Its function is as follows. Beta-glucosidases are one of a number of cellulolytic enzymes involved in the degradation of cellulosic biomass. Catalyzes the last step releasing glucose from the inhibitory cellobiose. This Aspergillus clavatus (strain ATCC 1007 / CBS 513.65 / DSM 816 / NCTC 3887 / NRRL 1 / QM 1276 / 107) protein is Probable beta-glucosidase A (bglA).